Here is a 306-residue protein sequence, read N- to C-terminus: tRNA dimethylallyltransferase (306 aa).

12-19 contributes to the ATP binding site; sequence GPTASGKT. 14 to 19 lines the substrate pocket; the sequence is TASGKT. Interaction with substrate tRNA stretches follow at residues 37–40, 161–165, and 242–247; these read DSAL, QRLSR, and RCVGYR.

This sequence belongs to the IPP transferase family. As to quaternary structure, monomer. It depends on Mg(2+) as a cofactor.

The catalysed reaction is adenosine(37) in tRNA + dimethylallyl diphosphate = N(6)-dimethylallyladenosine(37) in tRNA + diphosphate. In terms of biological role, catalyzes the transfer of a dimethylallyl group onto the adenine at position 37 in tRNAs that read codons beginning with uridine, leading to the formation of N6-(dimethylallyl)adenosine (i(6)A). This Shewanella amazonensis (strain ATCC BAA-1098 / SB2B) protein is tRNA dimethylallyltransferase.